A 472-amino-acid polypeptide reads, in one-letter code: Poly(A) polymerase catalytic subunit (472 aa).

Catalysis depends on residues Asp-191 and Asp-193.

This sequence belongs to the poxviridae poly(A) polymerase catalytic subunit family. As to quaternary structure, heterodimer of a large (catalytic) subunit and a small (regulatory) subunit.

The catalysed reaction is RNA(n) + ATP = RNA(n)-3'-adenine ribonucleotide + diphosphate. In terms of biological role, polymerase that creates the 3'-poly(A) tail of mRNA's. The polypeptide is Poly(A) polymerase catalytic subunit (PAPL) (Capra hircus (Goat)).